Reading from the N-terminus, the 233-residue chain is Large ribosomal subunit protein uL1 (233 aa).

This sequence belongs to the universal ribosomal protein uL1 family. As to quaternary structure, part of the 50S ribosomal subunit.

Its function is as follows. Binds directly to 23S rRNA. The L1 stalk is quite mobile in the ribosome, and is involved in E site tRNA release. Functionally, protein L1 is also a translational repressor protein, it controls the translation of the L11 operon by binding to its mRNA. The chain is Large ribosomal subunit protein uL1 from Campylobacter jejuni subsp. doylei (strain ATCC BAA-1458 / RM4099 / 269.97).